A 425-amino-acid polypeptide reads, in one-letter code: MNIISVGVNHKTAPIEIRERISLSEVQNKEFVTGLVSAGIAHEAMVLSTCNRTEIYVVPAMHEVTGEYLKDYIISFREAGKDVRPEHFFSRFYCGTARHLFEVSSAIDSLILGEGQILGQVKEAYRIAAEVQTAGILLTRLCHTAFSVAKKVKTRTKIMEGAVSVSYAAVELAQKIFSNLSMKKVLLVGAGETGELAAKHMFAKNARNIVITNRTRSKSEALAEELGTNQVLPYESYKEHLHEFDIIITAVSTKEYIISEAEMHAAMLKRRLKPVIILDLGLPRNVDPEVSKVQNMFLKDIDALKHIIDKNLERRSGELPKVHAIIDEELVAFGQWINTLKVRPTIVDLQSKFIEIKEKEIERYRHKVSEEELRRMEHLTDRIMKKILHHPIKMLKAPISTSDSMPSRVDLVRNVFDLEEPNQSH.

Residues 49–52 (TCNR), Ser-109, 114–116 (EGQ), and Gln-120 each bind substrate. The Nucleophile role is filled by Cys-50. An NADP(+)-binding site is contributed by 189–194 (GAGETG).

Belongs to the glutamyl-tRNA reductase family. As to quaternary structure, homodimer.

It carries out the reaction (S)-4-amino-5-oxopentanoate + tRNA(Glu) + NADP(+) = L-glutamyl-tRNA(Glu) + NADPH + H(+). The protein operates within porphyrin-containing compound metabolism; protoporphyrin-IX biosynthesis; 5-aminolevulinate from L-glutamyl-tRNA(Glu): step 1/2. It functions in the pathway porphyrin-containing compound metabolism; chlorophyll biosynthesis. Its function is as follows. Catalyzes the NADPH-dependent reduction of glutamyl-tRNA(Glu) to glutamate 1-semialdehyde (GSA). This Chlorobium phaeovibrioides (strain DSM 265 / 1930) (Prosthecochloris vibrioformis (strain DSM 265)) protein is Glutamyl-tRNA reductase.